Consider the following 285-residue polypeptide: Polyamine aminopropyltransferase (285 aa).

A PABS domain is found at 5-241 (DNWYIEHFQP…GWWSVTMASK (237 aa)). S-methyl-5'-thioadenosine is bound at residue Q35. The spermidine site is built by H66 and D90. S-methyl-5'-thioadenosine is bound by residues D110 and 141–142 (DG). The Proton acceptor role is filled by D160. 160–163 (DSTD) is a spermidine binding site. Residue P167 participates in S-methyl-5'-thioadenosine binding.

The protein belongs to the spermidine/spermine synthase family. As to quaternary structure, homodimer or homotetramer.

The protein resides in the cytoplasm. It catalyses the reaction S-adenosyl 3-(methylsulfanyl)propylamine + putrescine = S-methyl-5'-thioadenosine + spermidine + H(+). Its pathway is amine and polyamine biosynthesis; spermidine biosynthesis; spermidine from putrescine: step 1/1. Its function is as follows. Catalyzes the irreversible transfer of a propylamine group from the amino donor S-adenosylmethioninamine (decarboxy-AdoMet) to putrescine (1,4-diaminobutane) to yield spermidine. This Xanthomonas oryzae pv. oryzae (strain MAFF 311018) protein is Polyamine aminopropyltransferase.